Reading from the N-terminus, the 669-residue chain is DNA ligase (669 aa).

NAD(+) contacts are provided by residues 35–39 (DSVYD), 84–85 (SL), and E116. K118 functions as the N6-AMP-lysine intermediate in the catalytic mechanism. NAD(+) is bound by residues R139, E176, K291, and K315. Positions 409, 412, 427, and 432 each coordinate Zn(2+). Residues 591–669 (TTKATLAGKT…EAQLLELIKA (79 aa)) form the BRCT domain.

The protein belongs to the NAD-dependent DNA ligase family. LigA subfamily. It depends on Mg(2+) as a cofactor. Requires Mn(2+) as cofactor.

It carries out the reaction NAD(+) + (deoxyribonucleotide)n-3'-hydroxyl + 5'-phospho-(deoxyribonucleotide)m = (deoxyribonucleotide)n+m + AMP + beta-nicotinamide D-nucleotide.. Its function is as follows. DNA ligase that catalyzes the formation of phosphodiester linkages between 5'-phosphoryl and 3'-hydroxyl groups in double-stranded DNA using NAD as a coenzyme and as the energy source for the reaction. It is essential for DNA replication and repair of damaged DNA. This is DNA ligase from Microcystis aeruginosa (strain NIES-843 / IAM M-2473).